Reading from the N-terminus, the 477-residue chain is Regulatory protein HrpB (477 aa).

The 103-residue stretch at 375–477 (RRAYRYIIEN…NEAPSETIWR (103 aa)) folds into the HTH araC/xylS-type domain. DNA-binding regions (H-T-H motif) lie at residues 393 to 414 (REVA…KSAV) and 444 to 467 (IIDT…RKQF).

Functionally, positive regulation of hypersensitive response genes involved in plant pathogenicity and partly of its own synthesis in minimal medium. This is Regulatory protein HrpB (hrpB) from Ralstonia nicotianae (strain ATCC BAA-1114 / GMI1000) (Ralstonia solanacearum).